The sequence spans 517 residues: 2-isopropylmalate synthase (517 aa).

Residues 5–268 (IIIFDTTLRD…DTRINTQEIH (264 aa)) enclose the Pyruvate carboxyltransferase domain. Mn(2+) is bound by residues aspartate 14, histidine 202, histidine 204, and asparagine 238. The interval 393 to 517 (SLDVITSQTI…ADLKSHKISQ (125 aa)) is regulatory domain.

This sequence belongs to the alpha-IPM synthase/homocitrate synthase family. LeuA type 1 subfamily. Homodimer. Requires Mn(2+) as cofactor.

It is found in the cytoplasm. It carries out the reaction 3-methyl-2-oxobutanoate + acetyl-CoA + H2O = (2S)-2-isopropylmalate + CoA + H(+). It functions in the pathway amino-acid biosynthesis; L-leucine biosynthesis; L-leucine from 3-methyl-2-oxobutanoate: step 1/4. Catalyzes the condensation of the acetyl group of acetyl-CoA with 3-methyl-2-oxobutanoate (2-ketoisovalerate) to form 3-carboxy-3-hydroxy-4-methylpentanoate (2-isopropylmalate). The sequence is that of 2-isopropylmalate synthase from Histophilus somni (strain 2336) (Haemophilus somnus).